The following is a 331-amino-acid chain: FMRFamide-related neuropeptides (331 aa).

An N-terminal signal peptide occupies residues 1-25 (MRCWSPCSLLVVIVIYCLSSHTSEA). A propeptide spanning residues 26–65 (FDLAQACVESQRLSLLPICDTIFAVQQEGVQQSADDGMRS) is cleaved from the precursor. 2 positions are modified to phenylalanine amide: Phe71 and Phe83. Residues 86-94 (NVPDLPFED) constitute a propeptide that is removed on maturation. Residue Phe100 is modified to Phenylalanine amide. The propeptide occupies 103-168 (AAPQLDELLK…YIDDVEDSDV (66 aa)). Residues 122–158 (QKADETSVRRKRSTDAAPQNNAENPEQKNDSAKITKR) form a disordered region. Over residues 146-158 (PEQKNDSAKITKR) the composition is skewed to basic and acidic residues. Residues Phe174 and Phe181 each carry the phenylalanine amide modification. The propeptide occupies 184 to 194 (NPSDVGNKLTE). The residue at position 200 (Phe200) is a Phenylalanine amide. Residues 203-205 (DPE) constitute a propeptide that is removed on maturation. Phe211 carries the post-translational modification Phenylalanine amide. Residues 214–216 (SDD) constitute a propeptide that is removed on maturation. Phe222 is modified (phenylalanine amide). A propeptide spanning residues 225 to 236 (NPSDAEDELEED) is cleaved from the precursor. Phe242 carries the phenylalanine amide modification. A propeptide spanning residues 245 to 254 (GGEDDEEEAE) is cleaved from the precursor. At Phe260 the chain carries Phenylalanine amide. Residues 263–265 (DPE) constitute a propeptide that is removed on maturation. Phe271 is subject to Phenylalanine amide. The propeptide occupies 274–277 (SGED). Basic and acidic residues predominate over residues 279-296 (RFMRFGRNPDEQEADKRF). The tract at residues 279–310 (RFMRFGRNPDEQEADKRFMRFGRGGEDDEVST) is disordered. At Phe283 the chain carries Phenylalanine amide. Residues 286 to 293 (NPDEQEAD) constitute a propeptide that is removed on maturation. Phenylalanine amide is present on Phe299. Residues 302 to 312 (GGEDDEVSTED) constitute a propeptide that is removed on maturation. At Phe318 the chain carries Phenylalanine amide. A propeptide spanning residues 321-331 (SADKCKGCLEG) is cleaved from the precursor.

This sequence belongs to the FARP (FMRFamide related peptide) family.

The protein resides in the secreted. Excitatory neurotransmitters that directly modulate chromatophore function by activating chromatophore expansion at the chromatophore neuromuscular junction. This Doryteuthis opalescens (California market squid) protein is FMRFamide-related neuropeptides.